A 1102-amino-acid chain; its full sequence is Protein MMS22-like (1102 aa).

The protein belongs to the MMS22 family. MMS22L subfamily.

The protein resides in the nucleus. It is found in the chromosome. Functionally, involved in recombination-dependent repair of stalled or collapsed replication forks. The chain is Protein MMS22-like from Drosophila melanogaster (Fruit fly).